We begin with the raw amino-acid sequence, 278 residues long: S-formylglutathione hydrolase YeiG (278 aa).

Residues Ser145, Asp223, and His256 each act as charge relay system in the active site.

It belongs to the esterase D family.

The enzyme catalyses S-formylglutathione + H2O = formate + glutathione + H(+). Serine hydrolase involved in the detoxification of formaldehyde. Hydrolyzes S-formylglutathione to glutathione and formate. In Escherichia coli (strain UTI89 / UPEC), this protein is S-formylglutathione hydrolase YeiG (yeiG).